The primary structure comprises 520 residues: MKISDFCFASANDGSYTLKAFSELNEYKDVVKLVSDEKIGVGFHCYNLGLMNIVEDFSGNLDNESYLTSKVGKRMASELVTAYSKFGSTSSRTLHSSLNLPVVNITSLPTSQAKDLKPNHSLDDKGSMLRTQIHSILTGNGPLTIKRRIDAFYYSASSIFTRHMTSKYANPGSNVPQRFSFIPDCAMNKKPTLFLENRDNELQDSMTIMLMLGQVFSDALTYYLNASILYGILGRIESKVQVDLPAITLESVHVTNNLEISPAAFALIASVWLDKAEILSKLNAIDFIVSPEDNEDRISNLLKLMLPVQSNNITVEKSDTRFSVTHSDGFMRYYMCFSKHEFDYGDHLESFGIPVLRVRLGKPISNELNKPMLVMFKKHESISSINVRYQVRGGSIPKFRTSEFRRDIGMLVANSRFMATDITLILSTFYPFTQETDKLFIEQHIKEIFLDMYPWIDKLTSADAKSEVNISYGNLVLYSYGELVKNSIFIAMMDNCKDARNSFSRADMREIQAFVAAFTQ.

This is Non-structural protein PNS7 (S6) from Catharanthus roseus (Madagascar periwinkle).